The following is a 215-amino-acid chain: 3-isopropylmalate dehydratase small subunit (215 aa).

It belongs to the LeuD family. LeuD type 1 subfamily. In terms of assembly, heterodimer of LeuC and LeuD.

The enzyme catalyses (2R,3S)-3-isopropylmalate = (2S)-2-isopropylmalate. The protein operates within amino-acid biosynthesis; L-leucine biosynthesis; L-leucine from 3-methyl-2-oxobutanoate: step 2/4. Catalyzes the isomerization between 2-isopropylmalate and 3-isopropylmalate, via the formation of 2-isopropylmaleate. This Polynucleobacter necessarius subsp. necessarius (strain STIR1) protein is 3-isopropylmalate dehydratase small subunit.